The sequence spans 183 residues: Probable transcription termination protein NusA (183 aa).

The KH domain occupies Asp32–Lys98. The interval Arg149–Glu183 is disordered. A compositionally biased stretch (basic and acidic residues) spans Val156–Glu183.

The protein belongs to the NusA family.

The protein localises to the cytoplasm. In terms of biological role, participates in transcription termination. The sequence is that of Probable transcription termination protein NusA from Methanocaldococcus jannaschii (strain ATCC 43067 / DSM 2661 / JAL-1 / JCM 10045 / NBRC 100440) (Methanococcus jannaschii).